We begin with the raw amino-acid sequence, 440 residues long: Chromosomal replication initiator protein DnaA (440 aa).

The interval 1 to 69 (MKERILQEIK…VKVVLGNDAT (69 aa)) is domain I, interacts with DnaA modulators. Residues 69–96 (TFEITYEAFEPHSSYSEPLVKKRAVLLT) are domain II. The segment at 97 to 313 (PLNPDYTFEN…GAIIKLLVYK (217 aa)) is domain III, AAA+ region. 4 residues coordinate ATP: glycine 140, glycine 142, lysine 143, and threonine 144. Residues 314 to 440 (ETTGKEVDLK…GEISRRALSG (127 aa)) are domain IV, binds dsDNA.

This sequence belongs to the DnaA family. Oligomerizes as a right-handed, spiral filament on DNA at oriC.

It localises to the cytoplasm. In terms of biological role, plays an essential role in the initiation and regulation of chromosomal replication. ATP-DnaA binds to the origin of replication (oriC) to initiate formation of the DNA replication initiation complex once per cell cycle. Binds the DnaA box (a 9 base pair repeat at the origin) and separates the double-stranded (ds)DNA. Forms a right-handed helical filament on oriC DNA; dsDNA binds to the exterior of the filament while single-stranded (ss)DNA is stabiized in the filament's interior. The ATP-DnaA-oriC complex binds and stabilizes one strand of the AT-rich DNA unwinding element (DUE), permitting loading of DNA polymerase. After initiation quickly degrades to an ADP-DnaA complex that is not apt for DNA replication. Binds acidic phospholipids. In Thermotoga sp. (strain RQ2), this protein is Chromosomal replication initiator protein DnaA.